We begin with the raw amino-acid sequence, 124 residues long: Non-structural protein 2 (124 aa).

The DLNP; interaction with MAP1B motif lies at 121 to 124; the sequence is DLNP.

Belongs to the pneumovirus non-structural protein 2 family. As to quaternary structure, monomer (instable). Homomultimer. Heteromultimer with NS1. Interacts with host RIGI (via N-terminus); this interaction prevents host signaling pathway involved in interferon production. Interacts with host MAP1B/microtubule-associated protein 1B.

The protein localises to the host mitochondrion. Its function is as follows. Plays a major role in antagonizing the type I IFN-mediated antiviral response. Acts cooperatively with NS1 to repress activation and nuclear translocation of host IFN-regulatory factor IRF3. Interacts with the host cytoplasmic sensor of viral nucleic acids RIGI and prevents the interaction with its downstream partner MAVS. Together with NS2, participates in the proteasomal degradation of host STAT2, IRF3, IRF7, TBK1 and RIGI through a NS-degradasome involving CUL2 and Elongin-C. The degradasome requires an intact mitochondrial MAVS. Induces host SOCS1 expression. Induces activation of NF-kappa-B. Suppresses premature apoptosis by an NF-kappa-B-dependent, interferon-independent mechanism promoting continued viral replication. This chain is Non-structural protein 2 (1B), found in Homo sapiens (Human).